The primary structure comprises 200 residues: Probable nicotinate-nucleotide adenylyltransferase (200 aa).

It belongs to the NadD family.

The catalysed reaction is nicotinate beta-D-ribonucleotide + ATP + H(+) = deamido-NAD(+) + diphosphate. It functions in the pathway cofactor biosynthesis; NAD(+) biosynthesis; deamido-NAD(+) from nicotinate D-ribonucleotide: step 1/1. Catalyzes the reversible adenylation of nicotinate mononucleotide (NaMN) to nicotinic acid adenine dinucleotide (NaAD). The sequence is that of Probable nicotinate-nucleotide adenylyltransferase from Clavibacter michiganensis subsp. michiganensis (strain NCPPB 382).